Reading from the N-terminus, the 303-residue chain is Rhomboid-related protein 2 (303 aa).

The interval 20–39 is disordered; sequence MKEELEEEEKMREDGGGKDR. Residues 28–39 are compositionally biased toward basic and acidic residues; sequence EKMREDGGGKDR. Transmembrane regions (helical) follow at residues 72 to 92, 128 to 148, 159 to 179, 183 to 203, 212 to 232, 245 to 265, and 278 to 298; these read PVFI…YAVW, LVHA…VLGI, VGLV…IFDP, LVGA…NVLV, FGIF…GFAL, VSFA…YTVF, and FWIA…FNIF. Catalysis depends on Ser187, which acts as the Nucleophile. His250 is a catalytic residue.

This sequence belongs to the peptidase S54 family. Proteolytic processing of the proenzyme produces a N-terminal fragment (NTF) and a C-terminal fragment (CTF). The processing is required for activation of the protease.

It localises to the cell membrane. It catalyses the reaction Cleaves type-1 transmembrane domains using a catalytic dyad composed of serine and histidine that are contributed by different transmembrane domains.. Involved in regulated intramembrane proteolysis and the subsequent release of functional polypeptides from their membrane anchors. Known substrate: EFNB3. The chain is Rhomboid-related protein 2 (RHBDL2) from Homo sapiens (Human).